Here is a 272-residue protein sequence, read N- to C-terminus: Glutamate racemase (272 aa).

Substrate-binding positions include 10-11 and 42-43; these read DS and YG. Cys-73 (proton donor/acceptor) is an active-site residue. 74-75 serves as a coordination point for substrate; that stretch reads NT. Residue Cys-183 is the Proton donor/acceptor of the active site. Position 184–185 (184–185) interacts with substrate; the sequence is TH.

It belongs to the aspartate/glutamate racemases family.

It carries out the reaction L-glutamate = D-glutamate. It functions in the pathway cell wall biogenesis; peptidoglycan biosynthesis. Functionally, provides the (R)-glutamate required for cell wall biosynthesis. This chain is Glutamate racemase, found in Leifsonia xyli subsp. xyli (strain CTCB07).